The sequence spans 258 residues: Synapse differentiation-inducing gene protein 1 (258 aa).

Over methionine 1–histidine 181 the chain is Cytoplasmic. Serine 137 carries the post-translational modification Phosphoserine. The helical transmembrane segment at leucine 182 to tyrosine 202 threads the bilayer. At leucine 203–phenylalanine 228 the chain is on the extracellular side. Residues leucine 229–isoleucine 249 constitute an intramembrane region (helical). Topologically, residues alanine 250–leucine 258 are extracellular.

Belongs to the CD225/Dispanin family. As to quaternary structure, homodimer. Interacts with GRIA1 and GRIA2.

The protein localises to the cell membrane. Its subcellular location is the early endosome membrane. It localises to the postsynaptic density membrane. The protein resides in the synapse. It is found in the cell projection. The protein localises to the dendrite. Its subcellular location is the dendritic spine. May regulate AMPA receptor content at nascent synapses, and have a role in postsynaptic development and maturation. The sequence is that of Synapse differentiation-inducing gene protein 1 (SYNDIG1) from Homo sapiens (Human).